The sequence spans 151 residues: Internal scaffolding protein VP3 (151 aa).

The interval 120–151 (VETPQQAPQSTTNQTTTKPAPASGEPTPVPTP) is disordered. Polar residues predominate over residues 122–137 (TPQQAPQSTTNQTTTK).

Belongs to the microvidae B protein family.

The protein resides in the host cytoplasm. Participates in the assembly of the viral procapsid in the cytoplasm. Internal scaffolding protein VP3 is released from the procapsid upon genome packaging, possibly through affinity displacement by the protein VP8, or by proteolysis. This Bdellovibrio bacteriovorus (Bacteriophage phiMH2K) protein is Internal scaffolding protein VP3.